A 270-amino-acid chain; its full sequence is Hydroxyethylthiazole kinase (270 aa).

Substrate is bound at residue Met47. ATP contacts are provided by Arg123 and Thr169. Gly196 contacts substrate.

It belongs to the Thz kinase family. Mg(2+) serves as cofactor.

It carries out the reaction 5-(2-hydroxyethyl)-4-methylthiazole + ATP = 4-methyl-5-(2-phosphooxyethyl)-thiazole + ADP + H(+). It functions in the pathway cofactor biosynthesis; thiamine diphosphate biosynthesis; 4-methyl-5-(2-phosphoethyl)-thiazole from 5-(2-hydroxyethyl)-4-methylthiazole: step 1/1. Its function is as follows. Catalyzes the phosphorylation of the hydroxyl group of 4-methyl-5-beta-hydroxyethylthiazole (THZ). In Roseiflexus castenholzii (strain DSM 13941 / HLO8), this protein is Hydroxyethylthiazole kinase.